The primary structure comprises 299 residues: Heterodisulfide reductase subunit B-like protein (299 aa).

It belongs to the HdrB family. As to quaternary structure, the heterodisulfide reductase is composed of three subunits; HdlA, HdlB and HdlC. It forms a complex with the F420-non-reducing hydrogenase (Mvh), which provides the reducing equivalents to the heterodisulfide reductase.

The protein resides in the cytoplasm. In terms of biological role, has oxidoreductase activity. The Hdl and Mvh subunits may together mediate electron transfer from hydrogen to an unidentified electron acceptor on the cytoplasmic side of the membrane. This Archaeoglobus profundus (strain DSM 5631 / JCM 9629 / NBRC 100127 / Av18) protein is Heterodisulfide reductase subunit B-like protein (hdlB).